Here is a 500-residue protein sequence, read N- to C-terminus: L-aspartate semialdehyde sulfurtransferase (500 aa).

The active-site Cysteine persulfide intermediate is cysteine 131. CBS domains lie at 384–441 (MADF…IFDS) and 446–500 (MTKK…ARRY).

It belongs to the L-aspartate semialdehyde sulfurtransferase family. As to quaternary structure, forms homodimers. May form a complex with MA_1822.

It catalyses the reaction L-aspartate 4-semialdehyde + reduced 2[4Fe-4S]-[ferredoxin] + hydrogen sulfide + 3 H(+) = oxidized 2[4Fe-4S]-[ferredoxin] + L-homocysteine + H2O. Its pathway is amino-acid biosynthesis. Required for O-acetylhomoserine sulfhydrylase (OAHS)-independent homocysteine (Hcy) biosynthesis. Together with MA_1822, catalyzes the condensation of sulfide with aspartate semialdehyde to generate homocysteine. Likely functions through persulfide intermediate. In Methanosarcina acetivorans (strain ATCC 35395 / DSM 2834 / JCM 12185 / C2A), this protein is L-aspartate semialdehyde sulfurtransferase.